The sequence spans 471 residues: Protoheme IX farnesyltransferase, mitochondrial (471 aa).

The transit peptide at methionine 1–isoleucine 60 directs the protein to the mitochondrion. Helical transmembrane passes span alanine 188 to alanine 208, isoleucine 247 to leucine 267, isoleucine 287 to alanine 307, leucine 312 to phenylalanine 332, leucine 368 to valine 388, and lysine 430 to lysine 450.

Belongs to the UbiA prenyltransferase family.

Its subcellular location is the mitochondrion membrane. The catalysed reaction is heme b + (2E,6E)-farnesyl diphosphate + H2O = Fe(II)-heme o + diphosphate. Converts protoheme IX and farnesyl diphosphate to heme O. This Yarrowia lipolytica (strain CLIB 122 / E 150) (Yeast) protein is Protoheme IX farnesyltransferase, mitochondrial (COX10).